The primary structure comprises 138 residues: Sec-independent protein translocase protein TatB (138 aa).

Residues 2-18 traverse the membrane as a helical segment; it reads SFGEIIVILVVAILVLG. A disordered region spans residues 109–138; it reads NNLSGQNLNTEEKPNLSKLETQDKNGKINV. Residues 118-138 are compositionally biased toward basic and acidic residues; sequence TEEKPNLSKLETQDKNGKINV.

This sequence belongs to the TatB family. In terms of assembly, the Tat system comprises two distinct complexes: a TatABC complex, containing multiple copies of TatA, TatB and TatC subunits, and a separate TatA complex, containing only TatA subunits. Substrates initially bind to the TatABC complex, which probably triggers association of the separate TatA complex to form the active translocon.

The protein resides in the cell inner membrane. Part of the twin-arginine translocation (Tat) system that transports large folded proteins containing a characteristic twin-arginine motif in their signal peptide across membranes. Together with TatC, TatB is part of a receptor directly interacting with Tat signal peptides. TatB may form an oligomeric binding site that transiently accommodates folded Tat precursor proteins before their translocation. This chain is Sec-independent protein translocase protein TatB, found in Campylobacter jejuni subsp. jejuni serotype O:2 (strain ATCC 700819 / NCTC 11168).